Here is a 233-residue protein sequence, read N- to C-terminus: Ribosomal RNA-processing protein 14-C (233 aa).

Residues 32–65 (DRALLLQRRKEKAKARAEAKKLAKKESKAKQESK) adopt a coiled-coil conformation. Over residues 47 to 64 (RAEAKKLAKKESKAKQES) the composition is skewed to basic and acidic residues. Disordered stretches follow at residues 47–87 (RAEA…DNHK), 130–149 (KRRI…ESDK), and 164–233 (DNEQ…SKKK). The residue at position 75 (serine 75) is a Phosphoserine. A coiled-coil region spans residues 122 to 223 (ALKHLEAKKR…ESKKSKKGKA (102 aa)). 2 stretches are compositionally biased toward basic and acidic residues: residues 133-149 (IESM…ESDK) and 180-209 (KKKS…EENL). Basic residues predominate over residues 210–233 (KKRRESKKSKKGKAPKKKKPSKKK).

Belongs to the SURF6 family. As to quaternary structure, component of the 90S and 60S pre-ribosomal particles.

The protein localises to the nucleus. It localises to the nucleolus. Functionally, involved in ribosome biogenesis and cell polarity. Required for the synthesis of both 40S and 60S ribosomal subunits and may also play some direct role in correct positioning of the mitotic spindle during mitosis. The sequence is that of Ribosomal RNA-processing protein 14-C (rrp14c) from Schizosaccharomyces pombe (strain 972 / ATCC 24843) (Fission yeast).